The chain runs to 250 residues: Ribosomal RNA small subunit methyltransferase J (250 aa).

S-adenosyl-L-methionine contacts are provided by residues 96 to 97 (RD) and Asp-168.

Belongs to the methyltransferase superfamily. RsmJ family.

Its subcellular location is the cytoplasm. The catalysed reaction is guanosine(1516) in 16S rRNA + S-adenosyl-L-methionine = N(2)-methylguanosine(1516) in 16S rRNA + S-adenosyl-L-homocysteine + H(+). Specifically methylates the guanosine in position 1516 of 16S rRNA. This Neisseria meningitidis serogroup B (strain ATCC BAA-335 / MC58) protein is Ribosomal RNA small subunit methyltransferase J.